Consider the following 724-residue polypeptide: Degenerin mec-10 (724 aa).

At 1–125 (MNRGPPNPRM…GQAPNSLYRA (125 aa)) the chain is on the cytoplasmic side. The chain crosses the membrane as a helical span at residues 126–146 (VWVFLLLICAIQFINQAVAVI). The Extracellular portion of the chain corresponds to 147 to 684 (QKYQKMDKIT…FGGHLGLWSG (538 aa)). Residues asparagine 294, asparagine 370, asparagine 463, asparagine 605, and asparagine 624 are each glycosylated (N-linked (GlcNAc...) asparagine). The helical transmembrane segment at 685-705 (VSVMTCCEFVCLVLELLYMAV) threads the bilayer. Topologically, residues 706 to 724 (THHITQERIRRRENAANEF) are cytoplasmic.

Belongs to the amiloride-sensitive sodium channel (TC 1.A.6) family. The channel is probably composed of at least the mec-2, mec-4, mec-6 and mec-10 subunits.

The protein resides in the cell membrane. In terms of biological role, amiloride-sensitive sodium channel subunit required for mechanosensory transduction (touch sensitivity). Negatively regulates the turning step of male mating behavior. This chain is Degenerin mec-10, found in Caenorhabditis briggsae.